A 119-amino-acid polypeptide reads, in one-letter code: Large ribosomal subunit protein uL18 (119 aa).

It belongs to the universal ribosomal protein uL18 family. In terms of assembly, part of the 50S ribosomal subunit; part of the 5S rRNA/L5/L18/L25 subcomplex. Contacts the 5S and 23S rRNAs.

In terms of biological role, this is one of the proteins that bind and probably mediate the attachment of the 5S RNA into the large ribosomal subunit, where it forms part of the central protuberance. This is Large ribosomal subunit protein uL18 from Paracoccus denitrificans (strain Pd 1222).